A 196-amino-acid polypeptide reads, in one-letter code: Bcl-2-like protein 11 (196 aa).

Residues 1–68 (MAKQPSDVNS…PLAPPASPGP (68 aa)) are disordered. A compositionally biased stretch (polar residues) spans 34–43 (TSLQTESQGN). Serine 65 bears the Phosphoserine; by MAPK mark. A phosphoserine mark is found at serine 73, serine 83, and serine 90. The interval 90 to 114 (SGYFSFDTDRSPAPMSCDKSTQTPS) is disordered. A BH3 motif is present at residues 146 to 160 (IAQELRRIGDEFNET).

It belongs to the Bcl-2 family. In terms of assembly, forms heterodimers with a number of antiapoptotic Bcl-2 proteins, including MCL1, BCL2, BCL2L1 isoform Bcl-X(L), BCL2A1/BFL-1, and BCL2L2/BCLW. Does not heterodimerize with proapoptotic proteins such as BAD, BOK or BAK. Identified in a complex containing BCL2L11, DYNLL1 and BCL2L1 isoform Bcl-X(L); BH3 integrity is required for BCL2L1-binding. Interacts with YWHAZ. When phosphorylated, interacts with TRIM2; this interaction is associated with ubiquitination and degradation. Interacts (via BH3) with MCL1; this interaction may sequester BCL2L11 and prevent its pro-apoptotic activity. When phosphorylated, isoform BimEL interacts with USP27X; this interaction leads to BCL2L11 deubiquitination and stabilization. Interacts with GIMAP5. Interacts with BCL2L10/BCL-B. In terms of processing, phosphorylation at Ser-65 by MAPK1/MAPK3 leads interaction with TRIM2 and ubiquitination, followed by proteasomal degradation. Deubiquitination catalyzed by USP27X stabilizes the protein. Post-translationally, ubiquitination by TRIM2 following phosphorylation by MAPK1/MAPK3 leads to proteasomal degradation. Conversely, deubiquitination catalyzed by USP27X stabilizes the protein. In terms of tissue distribution, widely expressed.

It localises to the membrane. Its subcellular location is the mitochondrion. Induces apoptosis and anoikis. The polypeptide is Bcl-2-like protein 11 (Bcl2l11) (Rattus norvegicus (Rat)).